The chain runs to 294 residues: ATP synthase gamma chain (294 aa).

It belongs to the ATPase gamma chain family. F-type ATPases have 2 components, CF(1) - the catalytic core - and CF(0) - the membrane proton channel. CF(1) has five subunits: alpha(3), beta(3), gamma(1), delta(1), epsilon(1). CF(0) has three main subunits: a, b and c.

The protein resides in the cell inner membrane. Its function is as follows. Produces ATP from ADP in the presence of a proton gradient across the membrane. The gamma chain is believed to be important in regulating ATPase activity and the flow of protons through the CF(0) complex. This Paraburkholderia phytofirmans (strain DSM 17436 / LMG 22146 / PsJN) (Burkholderia phytofirmans) protein is ATP synthase gamma chain.